A 428-amino-acid chain; its full sequence is Probable pectin lyase F (428 aa).

Positions 1–20 (MVLLHPLLTAAALLGASARA) are cleaved as a signal peptide. C83 and C107 are oxidised to a cystine. Residue R257 is part of the active site. N276 carries N-linked (GlcNAc...) asparagine glycosylation. C324 and C332 are disulfide-bonded. 2 disordered regions span residues 337 to 367 (LTSS…MTTD) and 383 to 428 (GSGG…HHHY). Low complexity predominate over residues 389–417 (AASSSASITPSPTSSAIPSSSATPSSSAY). Positions 418–428 (ARRHYARHHHY) are enriched in basic residues.

The protein belongs to the polysaccharide lyase 1 family.

It is found in the secreted. It carries out the reaction Eliminative cleavage of (1-&gt;4)-alpha-D-galacturonan methyl ester to give oligosaccharides with 4-deoxy-6-O-methyl-alpha-D-galact-4-enuronosyl groups at their non-reducing ends.. Pectinolytic enzymes consist of four classes of enzymes: pectin lyase, polygalacturonase, pectin methylesterase and rhamnogalacturonase. Among pectinolytic enzymes, pectin lyase is the most important in depolymerization of pectin, since it cleaves internal glycosidic bonds of highly methylated pectins. The polypeptide is Probable pectin lyase F (pelF) (Aspergillus flavus (strain ATCC 200026 / FGSC A1120 / IAM 13836 / NRRL 3357 / JCM 12722 / SRRC 167)).